The primary structure comprises 573 residues: Putative adenine deaminase PTO1085 (573 aa).

The protein belongs to the metallo-dependent hydrolases superfamily. Adenine deaminase family.

The catalysed reaction is adenine + H2O + H(+) = hypoxanthine + NH4(+). The polypeptide is Putative adenine deaminase PTO1085 (Picrophilus torridus (strain ATCC 700027 / DSM 9790 / JCM 10055 / NBRC 100828 / KAW 2/3)).